Consider the following 154-residue polypeptide: NADPH-dependent 7-cyano-7-deazaguanine reductase (154 aa).

Residue Cys-52 is the Thioimide intermediate of the active site. The Proton donor role is filled by Asp-59. Substrate contacts are provided by residues 74–76 (VES) and 93–94 (HE).

Belongs to the GTP cyclohydrolase I family. QueF type 1 subfamily.

The protein resides in the cytoplasm. It catalyses the reaction 7-aminomethyl-7-carbaguanine + 2 NADP(+) = 7-cyano-7-deazaguanine + 2 NADPH + 3 H(+). Its pathway is tRNA modification; tRNA-queuosine biosynthesis. Its function is as follows. Catalyzes the NADPH-dependent reduction of 7-cyano-7-deazaguanine (preQ0) to 7-aminomethyl-7-deazaguanine (preQ1). The chain is NADPH-dependent 7-cyano-7-deazaguanine reductase from Paracoccus denitrificans (strain Pd 1222).